The following is an 81-amino-acid chain: Large ribosomal subunit protein bL31B (81 aa).

The protein belongs to the bacterial ribosomal protein bL31 family. Type B subfamily. As to quaternary structure, part of the 50S ribosomal subunit.

The chain is Large ribosomal subunit protein bL31B from Exiguobacterium sibiricum (strain DSM 17290 / CCUG 55495 / CIP 109462 / JCM 13490 / 255-15).